Consider the following 326-residue polypeptide: Mitochondrial glycine transporter (326 aa).

Solcar repeat units follow at residues 45-134 (HPVI…SKQY), 141-225 (PTAL…TRTA), and 237-321 (LIPL…MMAR). 6 consecutive transmembrane segments (helical) span residues 51–76 (FLCG…TRLQ), 109–135 (GMSP…KQYF), 147–172 (VILG…TRYE), 200–223 (GLTA…SQTR), 241–267 (INFS…KTHM), and 296–314 (GSVP…AWTV).

Belongs to the mitochondrial carrier (TC 2.A.29) family. SLC25A38 subfamily.

It localises to the mitochondrion inner membrane. The enzyme catalyses glycine(in) = glycine(out). Its function is as follows. Mitochondrial glycine transporter that imports glycine into the mitochondrial matrix. Plays an important role in providing glycine for the first enzymatic step in heme biosynthesis, the condensation of glycine with succinyl-CoA to produce 5-aminolevulinate (ALA) in the mitochondrial matrix. Required during erythropoiesis. In terms of biological role, plays a role as pro-apoptotic protein that induces caspase-dependent apoptosis. This chain is Mitochondrial glycine transporter, found in Mus musculus (Mouse).